The following is a 451-amino-acid chain: MNLTIKEEDFTNTFMKNEESFNTFRVTKVKRWNAKRLFKILFVTVFIVLAGGFSYYIFENFVFQKNRKINHIIKTSKYSTVGFNIENSYDRLMKTIKEHKLKNYIKESVKLFNKGLTKKSYLGSEFDNVELKDLANVLSFGEAKLGDNGQKFNFLFHTASSNVWVPSIKCTSESCESKNHYDSSKSKTYEKDDTPVKLTSKAGTISGIFSKDLVTIGKLSVPYKFIEMTEIVGFEPFYSESDVDGVFGLGWKDLSIGSIDPYIVELKTQNKIEQAVYSIYLPPENKNKGYLTIGGIEERFFDGPLNYEKLNHDLMWQVDLDVHFGNVSSKKANVILDSATSVITVPTEFFNQFVESASVFKVPFLSLYVTTCGNTKLPTLEYRSPNKVYTLEPKQYLEPLENIFSALCMLNIVPIDLEKNTFVLGDPFMRKYFTVYDYDNHTVGFALAKNL.

Residues 1-37 (MNLTIKEEDFTNTFMKNEESFNTFRVTKVKRWNAKRL) are Cytoplasmic-facing. A propeptide spanning residues 1-123 (MNLTIKEEDF…KGLTKKSYLG (123 aa)) is cleaved from the precursor. A helical; Signal-anchor for type II membrane protein membrane pass occupies residues 38–58 (FKILFVTVFIVLAGGFSYYIF). The Lumenal portion of the chain corresponds to 59-451 (ENFVFQKNRK…TVGFALAKNL (393 aa)). The Peptidase A1 domain maps to 139–446 (SFGEAKLGDN…DYDNHTVGFA (308 aa)). Intrachain disulfides connect Cys170–Cys175 and Cys372–Cys408.

Belongs to the peptidase A1 family. In terms of assembly, probable homodimer; in the zymogen form. Monomer; in the active form. Acidification disrupts homodimerization. Component of the hemozoin formation complex (HFC) composed of falcipains FP2A and/or FP2B, plasmepsins PMII, PMIII/HAP and PMIV, heme detoxifying protein HDP and falcilysin FLN. The HFC complex is involved in hemoglobin degradation and detoxification of heme in the food vacuole during the asexual blood stage. Proteolytically cleaved into the soluble active mature form by cysteine proteases in the digestive vacuole of trophozoites. Proteolysis requires an acidic environment. Transprocessing may serve as an alternate activation system.

Its subcellular location is the membrane. It is found in the vacuole lumen. The enzyme catalyses Hydrolysis of the bonds linking certain hydrophobic residues in hemoglobin or globin. Also cleaves small molecules substrates such as Ala-Leu-Glu-Arg-Thr-Phe-|-Phe(NO2)-Ser-Phe-Pro-Thr.. Dimerization causes loss of catalytic activity. Inhibited by pepstatin A. Inhibited by Zn(2+). During the asexual blood stage, catalyzes the cleavage of denatured host hemoglobin (Hb) or globins. Digestion of host Hb is an essential step which provides the parasite with amino acids for protein synthesis, and regulates osmolarity. This chain is Plasmepsin III, found in Plasmodium falciparum (isolate 3D7).